We begin with the raw amino-acid sequence, 481 residues long: Cytochrome P450 monooxygenase dpfgJ (481 aa).

The chain crosses the membrane as a helical span at residues 23-43 (LVFTQAAVIGSILFVFLLGLY). An N-linked (GlcNAc...) asparagine glycan is attached at N338. C427 contacts heme.

The protein belongs to the cytochrome P450 family. Heme serves as cofactor.

It is found in the membrane. Its pathway is secondary metabolite biosynthesis; terpenoid biosynthesis. Cytochrome P450 monooxygenase; part of the gene cluster that mediates the biosynthesis of diterpenoid pyrones. The first step of the pathway is the synthesis of the alpha-pyrone moiety by the polyketide synthase dpfgA via condensation of one acetyl-CoA starter unit with 3 malonyl-CoA units and 2 methylations. The alpha-pyrone is then combined with geranylgeranyl pyrophosphate (GGPP) formed by the GGPP synthase dpfgD through the action of the prenyltransferase dpfgC to yield a linear alpha-pyrone diterpenoid. Subsequent steps in the diterpenoid pyrone biosynthetic pathway involve the decalin core formation, which is initiated by the epoxidation of the C10-C11 olefin by the FAD-dependent oxidoreductase dpfgE, and is followed by a cyclization cascade catalyzed by the terpene cyclase dpfgB. The short chain dehydrogenase/reductase dpfgG then oxidizes the 8S hydroxy group to a ketone and the short chain dehydrogenase/reductase dpfgH reduces the ketone to the 8R hydroxy group to yield higginsianin B. Higginsianin B is further methylated by the methyltransferase dpfgI to produce the intermediate named FDDP B. The cytochrome P450 monooxygenase dfgpJ then catalyzes a three-step oxidation at C-27 to generate a carboxylic acid as well as C-26 hydroxylation. Finally, methyltransferase dpfgK methylates the carboxylic acid generated by dpfgJ, yielding the final diterpenoid pyrones from the pathway which were named FDDP D and FDDP E. The sequence is that of Cytochrome P450 monooxygenase dpfgJ from Gibberella zeae (strain ATCC MYA-4620 / CBS 123657 / FGSC 9075 / NRRL 31084 / PH-1) (Wheat head blight fungus).